A 111-amino-acid polypeptide reads, in one-letter code: Nucleoid-associated protein NMA1657 (111 aa).

Belongs to the YbaB/EbfC family. As to quaternary structure, homodimer.

The protein resides in the cytoplasm. It is found in the nucleoid. Functionally, binds to DNA and alters its conformation. May be involved in regulation of gene expression, nucleoid organization and DNA protection. This chain is Nucleoid-associated protein NMA1657, found in Neisseria meningitidis serogroup A / serotype 4A (strain DSM 15465 / Z2491).